A 349-amino-acid chain; its full sequence is Dihydroorotate dehydrogenase (quinone) (349 aa).

Residues 65–69 (AGFDK) and Ala89 each bind FMN. Lys69 contacts substrate. A substrate-binding site is contributed by 114-118 (NRMGF). Residues Asn143 and Asn176 each contribute to the FMN site. Asn176 is a binding site for substrate. Residue Ser179 is the Nucleophile of the active site. Asn181 contacts substrate. FMN is bound by residues Lys212 and Thr240. 241–242 (NT) serves as a coordination point for substrate. Positions 244-265 (TERPESLSHPHAGEQGGLSGAP) are disordered. Over residues 245–255 (ERPESLSHPHA) the composition is skewed to basic and acidic residues. FMN-binding positions include Gly263, Gly290, and 311 to 312 (YT).

It belongs to the dihydroorotate dehydrogenase family. Type 2 subfamily. As to quaternary structure, monomer. FMN serves as cofactor.

The protein resides in the cell membrane. The enzyme catalyses (S)-dihydroorotate + a quinone = orotate + a quinol. It participates in pyrimidine metabolism; UMP biosynthesis via de novo pathway; orotate from (S)-dihydroorotate (quinone route): step 1/1. Catalyzes the conversion of dihydroorotate to orotate with quinone as electron acceptor. The chain is Dihydroorotate dehydrogenase (quinone) from Halobacterium salinarum (strain ATCC 29341 / DSM 671 / R1).